Reading from the N-terminus, the 390-residue chain is Elongation factor Ts 2, mitochondrial (390 aa).

The N-terminal 24 residues, 1-24, are a transit peptide targeting the mitochondrion; that stretch reads MMIFSTAVLRLCATSRIGAVTKRA. A compositionally biased stretch (low complexity) spans 30–40; the sequence is SSASSSSSSSS. Residues 30-54 form a disordered region; the sequence is SSASSSSSSSSPTQSMPPQRYTHHQ.

It belongs to the EF-Ts family.

It localises to the mitochondrion. In terms of biological role, associates with the EF-Tu.GDP complex and induces the exchange of GDP to GTP. It remains bound to the aminoacyl-tRNA.EF-Tu.GTP complex up to the GTP hydrolysis stage on the ribosome. The chain is Elongation factor Ts 2, mitochondrial from Thalassiosira pseudonana (Marine diatom).